A 482-amino-acid chain; its full sequence is Aspartyl/glutamyl-tRNA(Asn/Gln) amidotransferase subunit B (482 aa).

Belongs to the GatB/GatE family. GatB subfamily. As to quaternary structure, heterotrimer of A, B and C subunits.

The enzyme catalyses L-glutamyl-tRNA(Gln) + L-glutamine + ATP + H2O = L-glutaminyl-tRNA(Gln) + L-glutamate + ADP + phosphate + H(+). It catalyses the reaction L-aspartyl-tRNA(Asn) + L-glutamine + ATP + H2O = L-asparaginyl-tRNA(Asn) + L-glutamate + ADP + phosphate + 2 H(+). Its function is as follows. Allows the formation of correctly charged Asn-tRNA(Asn) or Gln-tRNA(Gln) through the transamidation of misacylated Asp-tRNA(Asn) or Glu-tRNA(Gln) in organisms which lack either or both of asparaginyl-tRNA or glutaminyl-tRNA synthetases. The reaction takes place in the presence of glutamine and ATP through an activated phospho-Asp-tRNA(Asn) or phospho-Glu-tRNA(Gln). The chain is Aspartyl/glutamyl-tRNA(Asn/Gln) amidotransferase subunit B from Thermotoga neapolitana (strain ATCC 49049 / DSM 4359 / NBRC 107923 / NS-E).